The sequence spans 261 residues: Zinc import ATP-binding protein ZnuC (261 aa).

The region spanning 5 to 220 is the ABC transporter domain; it reads ISLKALSVTF…PSYIALFGSA (216 aa). ATP is bound at residue 37-44; sequence GPNGAGKS. Positions 236 to 261 are disordered; sequence HHDLAGQPVSGDATQCNHHHHGHHHD. Residues 252–261 show a composition bias toward basic residues; the sequence is NHHHHGHHHD.

It belongs to the ABC transporter superfamily. Zinc importer (TC 3.A.1.15.5) family. The complex is composed of two ATP-binding proteins (ZnuC), two transmembrane proteins (ZnuB) and a solute-binding protein (ZnuA).

Its subcellular location is the cell inner membrane. It carries out the reaction Zn(2+)(out) + ATP(in) + H2O(in) = Zn(2+)(in) + ADP(in) + phosphate(in) + H(+)(in). Its function is as follows. Part of the ABC transporter complex ZnuABC involved in zinc import. Responsible for energy coupling to the transport system. This chain is Zinc import ATP-binding protein ZnuC, found in Vibrio vulnificus (strain CMCP6).